Consider the following 1108-residue polypeptide: Ubiquitin carboxyl-terminal hydrolase 5 (1108 aa).

In terms of domain architecture, MATH spans 55–187 (FQRFTWHIKS…DGALLLTAYV (133 aa)). Residues Cys120 and Cys222 each act as nucleophile in the active site. The 316-residue stretch at 213 to 528 (VGLKNQGATC…SAYMLLYLRK (316 aa)) folds into the USP domain. His464 serves as the catalytic Proton acceptor.

The protein belongs to the peptidase C19 family.

The protein localises to the nucleus. The catalysed reaction is Thiol-dependent hydrolysis of ester, thioester, amide, peptide and isopeptide bonds formed by the C-terminal Gly of ubiquitin (a 76-residue protein attached to proteins as an intracellular targeting signal).. Its function is as follows. Hydrolase that deubiquitinates target proteins. Cleaves the UBL propeptide in sde2. In Schizosaccharomyces pombe (strain 972 / ATCC 24843) (Fission yeast), this protein is Ubiquitin carboxyl-terminal hydrolase 5 (ubp5).